A 179-amino-acid polypeptide reads, in one-letter code: Acireductone dioxygenase (179 aa).

His88, His90, Glu94, and His133 together coordinate Fe(2+). The Ni(2+) site is built by His88, His90, Glu94, and His133.

Belongs to the acireductone dioxygenase (ARD) family. Monomer. Interacts with MMP14. It depends on Fe(2+) as a cofactor. Ni(2+) serves as cofactor.

Its subcellular location is the cytoplasm. It is found in the nucleus. The protein localises to the cell membrane. It catalyses the reaction 1,2-dihydroxy-5-(methylsulfanyl)pent-1-en-3-one + O2 = 4-methylsulfanyl-2-oxobutanoate + formate + 2 H(+). It carries out the reaction 1,2-dihydroxy-5-(methylsulfanyl)pent-1-en-3-one + O2 = 3-(methylsulfanyl)propanoate + CO + formate + 2 H(+). The protein operates within amino-acid biosynthesis; L-methionine biosynthesis via salvage pathway; L-methionine from S-methyl-5-thio-alpha-D-ribose 1-phosphate: step 5/6. Catalyzes 2 different reactions between oxygen and the acireductone 1,2-dihydroxy-3-keto-5-methylthiopentene (DHK-MTPene) depending upon the metal bound in the active site. Fe-containing acireductone dioxygenase (Fe-ARD) produces formate and 2-keto-4-methylthiobutyrate (KMTB), the alpha-ketoacid precursor of methionine in the methionine recycle pathway. Ni-containing acireductone dioxygenase (Ni-ARD) produces methylthiopropionate, carbon monoxide and formate, and does not lie on the methionine recycle pathway. The polypeptide is Acireductone dioxygenase (adi1) (Xenopus laevis (African clawed frog)).